The following is a 621-amino-acid chain: MKNKKPRKFITQAPTLSLLALALLAGSVQAEDIGERTDQGTAMLASLQSEQGLIYLNADVWLKRQGATPLMTRDQLRERVLARGERLFIDFSAVTDQSERQQTRKAMEQLAGISFDADWVLVSGYKGELLFTPLGGVDDPAFYQVMERVESLEGQGKRHKRSLTQPPAAEAGLPHVAFYLNVNRKISDAECTFPRSRTWSRGDRLFCDSPNISLVYRVNLERSLQFGNTGSATPDAKIVRISLDEESAGAGIQLNEDLTWSENIADYLLLDGWARDYATDAIAQDYRFSIEASNTKAAVLKSLPTNLNSKYEHREISGFEVGVTGGVEVNKDGPKAKLEASAKFSQQRQLAYNTQDYRVERSAPSAQKVSFSWVRDQYATAESLLSSKTATVWGMGYDVDHNRIQPLSYKGFVPNLDVIYKAAPDETGSTEFKIDSSVNIRPIYTGIYKHYYVVGAHVSFQGFEDTDKRRRVTASTSFKVDWNHPVFTGGRPVNLQLGGFDNRCLSADANHGLSAVTCDETSAAQSFIYDQYGRYVSAQDTRRCLDGNNLGQLQSCSLSLGQRWEWKADSDALSNLSAHQLLGHDKQSGALGLYDENGNPQNVSVRTLTSYTRIFGPPASH.

Positions 1–30 (MKNKKPRKFITQAPTLSLLALALLAGSVQA) are cleaved as a signal peptide. The Ricin B-type lectin domain maps to 491-610 (RPVNLQLGGF…QNVSVRTLTS (120 aa)).

The protein belongs to the HlyA hemolysin family.

Its function is as follows. Bacterial hemolysins are exotoxins that attack blood cell membranes and cause cell rupture by mechanisms not clearly defined. The polypeptide is Hemolysin ahh1 (ahh1) (Aeromonas hydrophila subsp. hydrophila (strain ATCC 7966 / DSM 30187 / BCRC 13018 / CCUG 14551 / JCM 1027 / KCTC 2358 / NCIMB 9240 / NCTC 8049)).